The sequence spans 297 residues: tRNA dimethylallyltransferase (297 aa).

Position 9 to 16 (glycine 9 to serine 16) interacts with ATP. Threonine 11–serine 16 lines the substrate pocket. Interaction with substrate tRNA stretches follow at residues aspartate 34 to glutamine 37 and glutamine 155 to arginine 159.

This sequence belongs to the IPP transferase family. In terms of assembly, monomer. Mg(2+) is required as a cofactor.

The enzyme catalyses adenosine(37) in tRNA + dimethylallyl diphosphate = N(6)-dimethylallyladenosine(37) in tRNA + diphosphate. Catalyzes the transfer of a dimethylallyl group onto the adenine at position 37 in tRNAs that read codons beginning with uridine, leading to the formation of N6-(dimethylallyl)adenosine (i(6)A). This is tRNA dimethylallyltransferase from Leuconostoc mesenteroides subsp. mesenteroides (strain ATCC 8293 / DSM 20343 / BCRC 11652 / CCM 1803 / JCM 6124 / NCDO 523 / NBRC 100496 / NCIMB 8023 / NCTC 12954 / NRRL B-1118 / 37Y).